Here is a 212-residue protein sequence, read N- to C-terminus: Leucine efflux protein (212 aa).

A run of 6 helical transmembrane segments spans residues 12–32 (TYLVGAIFIVLVPGPNTLFVL), 49–69 (GVFIGDAVLMFLAWAGVATLI), 71–91 (TTPILFNIVRYLGAFYLLYLG), 122–142 (ILSLTNPKAILFYVSFFVQFI), 153–173 (FFILATTLELVSFCYLSFLII), and 188–208 (LAKVGNSLIGLMFVGFAARLA).

The protein belongs to the Rht family.

It localises to the cell inner membrane. It catalyses the reaction L-leucine(in) + H(+)(out) = L-leucine(out) + H(+)(in). Exporter of leucine. This chain is Leucine efflux protein (leuE), found in Shigella sonnei (strain Ss046).